Here is a 304-residue protein sequence, read N- to C-terminus: Undecaprenyl-diphosphatase (304 aa).

Transmembrane regions (helical) follow at residues 5-25 (FLFI…EFVP), 47-67 (GFPE…VVVL), 72-92 (ISSS…LKTS), 111-131 (FGIN…LFHD), 137-157 (LFST…LIVI), 209-231 (ISGL…AMVG), 248-268 (TNWI…LVVI), and 283-303 (FAIY…TKVI).

The protein belongs to the UppP family.

Its subcellular location is the cell membrane. The catalysed reaction is di-trans,octa-cis-undecaprenyl diphosphate + H2O = di-trans,octa-cis-undecaprenyl phosphate + phosphate + H(+). In terms of biological role, catalyzes the dephosphorylation of undecaprenyl diphosphate (UPP). Confers resistance to bacitracin. This is Undecaprenyl-diphosphatase from Clostridium perfringens (strain ATCC 13124 / DSM 756 / JCM 1290 / NCIMB 6125 / NCTC 8237 / Type A).